Reading from the N-terminus, the 88-residue chain is Translation initiation factor IF-1 2 (88 aa).

Positions 1 to 72 (MAKEELIELQ…TKGRINFRHK (72 aa)) constitute an S1-like domain.

It belongs to the IF-1 family. In terms of assembly, component of the 30S ribosomal translation pre-initiation complex which assembles on the 30S ribosome in the order IF-2 and IF-3, IF-1 and N-formylmethionyl-tRNA(fMet); mRNA recruitment can occur at any time during PIC assembly.

It is found in the cytoplasm. Functionally, one of the essential components for the initiation of protein synthesis. Stabilizes the binding of IF-2 and IF-3 on the 30S subunit to which N-formylmethionyl-tRNA(fMet) subsequently binds. Helps modulate mRNA selection, yielding the 30S pre-initiation complex (PIC). Upon addition of the 50S ribosomal subunit IF-1, IF-2 and IF-3 are released leaving the mature 70S translation initiation complex. This is Translation initiation factor IF-1 2 from Bordetella avium (strain 197N).